A 190-amino-acid polypeptide reads, in one-letter code: Xanthine phosphoribosyltransferase (190 aa).

Residues L20 and N27 each coordinate xanthine. Position 128–132 (128–132) interacts with 5-phospho-alpha-D-ribose 1-diphosphate; it reads ANGKA. K156 is a binding site for xanthine.

This sequence belongs to the purine/pyrimidine phosphoribosyltransferase family. Xpt subfamily. Homodimer.

It is found in the cytoplasm. The catalysed reaction is XMP + diphosphate = xanthine + 5-phospho-alpha-D-ribose 1-diphosphate. The protein operates within purine metabolism; XMP biosynthesis via salvage pathway; XMP from xanthine: step 1/1. Its function is as follows. Converts the preformed base xanthine, a product of nucleic acid breakdown, to xanthosine 5'-monophosphate (XMP), so it can be reused for RNA or DNA synthesis. This chain is Xanthine phosphoribosyltransferase, found in Pseudomonas entomophila (strain L48).